We begin with the raw amino-acid sequence, 88 residues long: MTLLASISSIGNVKSISKSNNFSSLSNSSLQSSNSIQCGGCGGSPLIGTVGNLVGGVLVGTGIIVGTVVGTVNGVVGGLLSGPNCGCH.

Belongs to the hssA/B family.

The protein is HssA/B-like protein 12 (hssl12) of Dictyostelium discoideum (Social amoeba).